A 334-amino-acid chain; its full sequence is Beta-ketoacyl-[acyl-carrier-protein] synthase III (334 aa).

Residues cysteine 114 and histidine 253 contribute to the active site. The ACP-binding stretch occupies residues 254–258 (QANIR). The active site involves asparagine 283.

The protein belongs to the thiolase-like superfamily. FabH family. Homodimer.

Its subcellular location is the cytoplasm. It carries out the reaction malonyl-[ACP] + acetyl-CoA + H(+) = 3-oxobutanoyl-[ACP] + CO2 + CoA. It participates in lipid metabolism; fatty acid biosynthesis. Its function is as follows. Catalyzes the condensation reaction of fatty acid synthesis by the addition to an acyl acceptor of two carbons from malonyl-ACP. Catalyzes the first condensation reaction which initiates fatty acid synthesis and may therefore play a role in governing the total rate of fatty acid production. Possesses both acetoacetyl-ACP synthase and acetyl transacylase activities. Its substrate specificity determines the biosynthesis of branched-chain and/or straight-chain of fatty acids. This chain is Beta-ketoacyl-[acyl-carrier-protein] synthase III, found in Campylobacter curvus (strain 525.92).